We begin with the raw amino-acid sequence, 202 residues long: LexA repressor (202 aa).

Residues 28-48 constitute a DNA-binding region (H-T-H motif); sequence IAEIARAIGVSSPHGVREQLR. Catalysis depends on for autocatalytic cleavage activity residues Ser120 and Lys157.

The protein belongs to the peptidase S24 family. Homodimer.

It carries out the reaction Hydrolysis of Ala-|-Gly bond in repressor LexA.. Represses a number of genes involved in the response to DNA damage (SOS response), including recA and lexA. In the presence of single-stranded DNA, RecA interacts with LexA causing an autocatalytic cleavage which disrupts the DNA-binding part of LexA, leading to derepression of the SOS regulon and eventually DNA repair. This Methylococcus capsulatus (strain ATCC 33009 / NCIMB 11132 / Bath) protein is LexA repressor.